A 184-amino-acid polypeptide reads, in one-letter code: Fungal defensin copsin (184 aa).

An N-terminal signal peptide occupies residues 1–23 (MKLSTSLLAIVAVASTFIGNALS). The propeptide occupies 24–127 (ATTVPGCFAE…LGRVLPVEKR (104 aa)). Q128 bears the Pyrrolidone carboxylic acid mark. 6 cysteine pairs are disulfide-bonded: C130–C159, C137–C167, C145–C175, C149–C177, C152–C184, and C162–C181.

This sequence belongs to the invertebrate defensin family. In terms of processing, contains a unique connectivity of 6 cysteine bonds in contrast to most other CS-alpha-beta defensins which are linked by 3 or 4 disulfide bonds. Disulfide bonds are essential for structural integrity and antibacterial activity, since activity is lost after treatment with reducing agents. Thanks to disulfide bonds and N-terminal pyroglutamate, the protein is extremely stable in a wide pH and temperature range and insensitive toward proteases.

It is found in the secreted. The protein localises to the target cell membrane. Functionally, antimicrobial peptide that acts against Gram-positive bacteria (Listeria spp., Enterococcus spp., B.subtilis, B.anthracis, P.aeruginosa). Is not active against Gram-negative bacteria. It selectively inhibits peptidoglycan biosynthesis through complex formation with the cell wall precursor lipid II (1:1 molar ratio), probably anchoring lipid II to the membrane, thus inhibiting cell wall synthesis. The interaction with lipid II involves the third position of the pentapeptide. Shows bactericidal activity at about 2-fold minimal inhibitory concentrations (MIC), but does not form pore across the membrane. This is Fungal defensin copsin from Coprinopsis cinerea (Inky cap fungus).